A 271-amino-acid polypeptide reads, in one-letter code: Expansin-B1 (271 aa).

The first 24 residues, 1–24 (MQLFPVILPTLCVFLHLLISGSGS), serve as a signal peptide directing secretion. Positions 58–169 (GGACGYGSLV…RRTACKYRGK (112 aa)) constitute an Expansin-like EG45 domain. 3 disulfides stabilise this stretch: cysteine 61-cysteine 90, cysteine 93-cysteine 164, and cysteine 98-cysteine 104. One can recognise an Expansin-like CBD domain in the interval 182–263 (YWLSLLIEYE…NWVPKATYTS (82 aa)). An N-linked (GlcNAc...) asparagine glycan is attached at asparagine 242.

The protein belongs to the expansin family. Expansin B subfamily.

It localises to the secreted. It is found in the cell wall. The protein resides in the membrane. Its function is as follows. May cause loosening and extension of plant cell walls by disrupting non-covalent bonding between cellulose microfibrils and matrix glucans. No enzymatic activity has been found. The chain is Expansin-B1 (EXPB1) from Arabidopsis thaliana (Mouse-ear cress).